The primary structure comprises 518 residues: GMP synthase [glutamine-hydrolyzing] (518 aa).

The region spanning 8–201 is the Glutamine amidotransferase type-1 domain; that stretch reads TVLIIDFGSQ…VLKISNLKGN (194 aa). Cys-85 functions as the Nucleophile in the catalytic mechanism. Residues His-175 and Glu-177 contribute to the active site. A GMPS ATP-PPase domain is found at 202–393; the sequence is WSMASYREQT…LGLPEQFIGR (192 aa). 229-235 contributes to the ATP binding site; sequence SGGVDSS.

In terms of assembly, homodimer.

It carries out the reaction XMP + L-glutamine + ATP + H2O = GMP + L-glutamate + AMP + diphosphate + 2 H(+). It functions in the pathway purine metabolism; GMP biosynthesis; GMP from XMP (L-Gln route): step 1/1. In terms of biological role, catalyzes the synthesis of GMP from XMP. The chain is GMP synthase [glutamine-hydrolyzing] from Bartonella henselae (strain ATCC 49882 / DSM 28221 / CCUG 30454 / Houston 1) (Rochalimaea henselae).